The sequence spans 79 residues: Small ribosomal subunit protein bS18 (79 aa).

This sequence belongs to the bacterial ribosomal protein bS18 family. Part of the 30S ribosomal subunit. Forms a tight heterodimer with protein bS6.

In terms of biological role, binds as a heterodimer with protein bS6 to the central domain of the 16S rRNA, where it helps stabilize the platform of the 30S subunit. In Bacillus pumilus (strain SAFR-032), this protein is Small ribosomal subunit protein bS18.